Consider the following 241-residue polypeptide: Large ribosomal subunit protein uL13c (241 aa).

The N-terminal 50 residues, 1–50, are a transit peptide targeting the chloroplast; the sequence is MAVLCSSSTVILSSSSVKSSGSERKSPFLGFSLTAISKPSVRVGIYANSK.

Belongs to the universal ribosomal protein uL13 family. Part of the 50S ribosomal subunit.

It is found in the plastid. Its subcellular location is the chloroplast. This chain is Large ribosomal subunit protein uL13c (RPL13), found in Arabidopsis thaliana (Mouse-ear cress).